Consider the following 358-residue polypeptide: tRNA-specific 2-thiouridylase MnmA (358 aa).

ATP is bound by residues 6 to 13 (ALSGGVDS) and M32. C103 serves as the catalytic Nucleophile. A disulfide bridge links C103 with C201. G127 contacts ATP. The interaction with tRNA stretch occupies residues 151 to 153 (KDQ). The active-site Cysteine persulfide intermediate is C201.

It belongs to the MnmA/TRMU family.

The protein resides in the cytoplasm. The enzyme catalyses S-sulfanyl-L-cysteinyl-[protein] + uridine(34) in tRNA + AH2 + ATP = 2-thiouridine(34) in tRNA + L-cysteinyl-[protein] + A + AMP + diphosphate + H(+). In terms of biological role, catalyzes the 2-thiolation of uridine at the wobble position (U34) of tRNA, leading to the formation of s(2)U34. The chain is tRNA-specific 2-thiouridylase MnmA from Thermotoga petrophila (strain ATCC BAA-488 / DSM 13995 / JCM 10881 / RKU-1).